The primary structure comprises 121 residues: Ribonuclease P protein component (121 aa).

This sequence belongs to the RnpA family. As to quaternary structure, consists of a catalytic RNA component (M1 or rnpB) and a protein subunit.

The catalysed reaction is Endonucleolytic cleavage of RNA, removing 5'-extranucleotides from tRNA precursor.. RNaseP catalyzes the removal of the 5'-leader sequence from pre-tRNA to produce the mature 5'-terminus. It can also cleave other RNA substrates such as 4.5S RNA. The protein component plays an auxiliary but essential role in vivo by binding to the 5'-leader sequence and broadening the substrate specificity of the ribozyme. This chain is Ribonuclease P protein component, found in Nitrosomonas eutropha (strain DSM 101675 / C91 / Nm57).